A 917-amino-acid polypeptide reads, in one-letter code: Protein translocase subunit SecA (917 aa).

ATP contacts are provided by residues glutamine 87, 105–109 (GEGKT), and aspartate 516. Positions 901, 903, 912, and 913 each coordinate Zn(2+).

The protein belongs to the SecA family. Monomer and homodimer. Part of the essential Sec protein translocation apparatus which comprises SecA, SecYEG and auxiliary proteins SecDF-YajC and YidC. Zn(2+) is required as a cofactor.

The protein localises to the cell inner membrane. The protein resides in the cytoplasm. It carries out the reaction ATP + H2O + cellular proteinSide 1 = ADP + phosphate + cellular proteinSide 2.. Its function is as follows. Part of the Sec protein translocase complex. Interacts with the SecYEG preprotein conducting channel. Has a central role in coupling the hydrolysis of ATP to the transfer of proteins into and across the cell membrane, serving both as a receptor for the preprotein-SecB complex and as an ATP-driven molecular motor driving the stepwise translocation of polypeptide chains across the membrane. The polypeptide is Protein translocase subunit SecA (Acidovorax sp. (strain JS42)).